The following is a 181-amino-acid chain: Histone deacetylase complex subunit SAP30L-B (181 aa).

2 disulfide bridges follow: C26–C27 and C35–C71. The Atypical zinc finger occupies 26 to 74; the sequence is CCLIDGGERCPRPAGNASFSKRVQKSISQKKLKLDIDKSVRHLYICDFH. A disordered region spans residues 82–103; it reads RNKRKRKTSDDGGDSPEHETDV. The Nuclear localization signal (NLS) signature appears at 83–88; it reads NKRKRK. The important for DNA and phosphoinositide binding stretch occupies residues 85-87; sequence RKR.

This sequence belongs to the SAP30 family. Interacts with components of the histone deacetylase complex sin3a, hdac1 and hdac2. Binds histones and nucleosomes.

It is found in the nucleus. Its subcellular location is the nucleolus. In terms of biological role, functions as a transcription repressor, probably via its interaction with histone deacetylase complexes. Involved in the functional recruitment of the class 1 Sin3-histone deacetylase complex (HDAC) to the nucleolus. Binds DNA, apparently without sequence-specificity, and bends bound double-stranded DNA. Binds phosphoinositol phosphates (phosphoinositol 3-phosphate, phosphoinositol 4-phosphate and phosphoinositol 5-phosphate) via the same basic sequence motif that mediates DNA binding and nuclear import. The sequence is that of Histone deacetylase complex subunit SAP30L-B (sap30l-b) from Xenopus laevis (African clawed frog).